A 460-amino-acid chain; its full sequence is Endoglucanase C (460 aa).

An N-terminal signal peptide occupies residues 1-32; it reads MIKGSSLKRFKSLVMAAIFSVSIISTAIASSA. Catalysis depends on Glu99, which acts as the Proton donor. The active-site Nucleophile is Asp155. The 61-residue stretch at 400 to 460 folds into the Dockerin domain; the sequence is KPDLKGDVNN…FAQLKVKLLN (61 aa).

Belongs to the glycosyl hydrolase 8 (cellulase D) family. In terms of assembly, monomer. Post-translationally, there are two forms of the cellulase. The shorter form lacks probably the C-terminal reiterated domains.

It carries out the reaction Endohydrolysis of (1-&gt;4)-beta-D-glucosidic linkages in cellulose, lichenin and cereal beta-D-glucans.. Its pathway is glycan metabolism; cellulose degradation. Functionally, the biological conversion of cellulose to glucose generally requires three types of hydrolytic enzymes: (1) Endoglucanases which cut internal beta-1,4-glucosidic bonds; (2) Exocellobiohydrolases that cut the disaccharide cellobiose from the non-reducing end of the cellulose polymer chain; (3) Beta-1,4-glucosidases which hydrolyze the cellobiose and other short cello-oligosaccharides to glucose. The polypeptide is Endoglucanase C (celCCC) (Ruminiclostridium cellulolyticum (strain ATCC 35319 / DSM 5812 / JCM 6584 / H10) (Clostridium cellulolyticum)).